A 284-amino-acid chain; its full sequence is Aquaporin NIP1-1 (284 aa).

Positions 1–12 are enriched in polar residues; the sequence is MAGGDNNSQTTN. The segment at 1–28 is disordered; the sequence is MAGGDNNSQTTNGGSGHEQRAMEEGRKQ. A compositionally biased stretch (basic and acidic residues) spans 17-28; it reads HEQRAMEEGRKQ. Helical transmembrane passes span 50–70 and 78–98; these read IIAE…AVTI and ITFP…VYAV. The short motif at 107–109 is the NPA 1 element; sequence NPA. A run of 3 helical transmembrane segments spans residues 129–149, 166–186, and 194–214; these read AAAQ…MFGG, SLVL…GVAT, and LAGL…GPIS. The short motif at 219 to 221 is the NPA 2 element; sequence NPA. The helical transmembrane segment at 236–256 threads the bilayer; that stretch reads IWVYIVGPVAGAVAGAWAYNI.

The protein belongs to the MIP/aquaporin (TC 1.A.8) family. NIP (TC 1.A.8.12) subfamily. As to expression, expressed in leaves and at lower levels in roots and anthers.

It is found in the membrane. Aquaporins facilitate the transport of water and small neutral solutes across cell membranes. This Oryza sativa subsp. japonica (Rice) protein is Aquaporin NIP1-1 (NIP1-1).